Here is a 274-residue protein sequence, read N- to C-terminus: 1D-myo-inositol 2-acetamido-2-deoxy-alpha-D-glucopyranoside deacetylase 2 (274 aa).

Residues His-6, Asp-9, and His-140 each coordinate Zn(2+).

The protein belongs to the MshB deacetylase family. Zn(2+) is required as a cofactor.

It carries out the reaction 1D-myo-inositol 2-acetamido-2-deoxy-alpha-D-glucopyranoside + H2O = 1D-myo-inositol 2-amino-2-deoxy-alpha-D-glucopyranoside + acetate. In terms of biological role, catalyzes the deacetylation of 1D-myo-inositol 2-acetamido-2-deoxy-alpha-D-glucopyranoside (GlcNAc-Ins) in the mycothiol biosynthesis pathway. This Saccharopolyspora erythraea (strain ATCC 11635 / DSM 40517 / JCM 4748 / NBRC 13426 / NCIMB 8594 / NRRL 2338) protein is 1D-myo-inositol 2-acetamido-2-deoxy-alpha-D-glucopyranoside deacetylase 2.